We begin with the raw amino-acid sequence, 100 residues long: MDVFFLGLLVVIAIFTNAKRYSSFRFLFPSKNLDPNETKWGWNIRIATFRSLLNTIPSIPHWRTMWGTVRVGIVHTPSAKVRERVDCSYYFLARGFKTQK.

This is an uncharacterized protein from Schizosaccharomyces pombe (strain 972 / ATCC 24843) (Fission yeast).